The sequence spans 1457 residues: NBPF family member NBPF12 (1457 aa).

Positions 75–119 (RQFKEEKLAEQLKQAEELRQYKVLVHSQERELTQLREKLREGRDA) form a coiled coil. Positions 162–200 (LSPENDEDEDEDVQVEEDEKVLESSAPREVQKAEESKVP) are disordered. Residues 165–181 (ENDEDEDEDVQVEEDEK) show a composition bias toward acidic residues. In terms of domain architecture, Olduvai 1 spans 165–259 (ENDEDEDEDV…ECQDALNILP (95 aa)). Basic and acidic residues predominate over residues 190–200 (EVQKAEESKVP). Positions 339-390 (KSMLRNELQFKEEKLAEQLKQAEELRQYKVLVHSQERELTQLREKLREGRDA) form a coiled coil. The segment at 432-472 (KLSPENDEDEDEDVQVEEDEKVLESSSPREMQKAEESKVPE) is disordered. The span at 436 to 452 (ENDEDEDEDVQVEEDEK) shows a compositional bias: acidic residues. The 95-residue stretch at 436-530 (ENDEDEDEDV…ECQDALNILP (95 aa)) folds into the Olduvai 2 domain. The segment covering 461–472 (EMQKAEESKVPE) has biased composition (basic and acidic residues). A coiled-coil region spans residues 610 to 661 (KSMLRNELQFKEEKLAEQLKQAEELRQYKVLVHSQERELTQLREKLREGRDA). Olduvai domains are found at residues 707 to 799 (ENDN…HIIP), 800 to 871 (ENES…VDIG), 872 to 963 (RHRW…PSCP), 966 to 1021 (SREL…LDVD), 1022 to 1114 (RIKK…RSKK), 1115 to 1207 (KRRR…PSCP), 1210 to 1265 (SREL…LDVD), 1266 to 1358 (RIKK…RSKK), and 1359 to 1457 (KRRR…IFPQ). Disordered regions lie at residues 721–746 (AEKV…EDSL) and 791–838 (WEDA…GYST). Composition is skewed to acidic residues over residues 801–810 (NESDDEEEEE) and 821–833 (ESEE…ESWD). A disordered region spans residues 1100 to 1139 (KKGKGKKRRGRRSKKKRRRGRKEGEEDQNPPCPRLSRELL). Residues 1102–1120 (GKGKKRRGRRSKKKRRRGR) are compositionally biased toward basic residues. Positions 1344–1378 (KKGKGKKRRGRRSKKKRRRGRKEGEEDQNPPCPRL) are disordered. A compositionally biased stretch (basic residues) spans 1346–1364 (GKGKKRRGRRSKKKRRRGR).

The protein belongs to the NBPF family. As to expression, widely expressed with highest levels in brain, ovary, mammary gland, skin and adipose tissue. Also expressed in testis. Detected in a number of tumors including osteosarcoma, mammary carcinoma and hepatocellular carcinoma.

It localises to the cytoplasm. The polypeptide is NBPF family member NBPF12 (Homo sapiens (Human)).